Here is a 279-residue protein sequence, read N- to C-terminus: uncharacterized protein (279 aa).

Residues 1 to 87 (MRVNGRNLTN…DEYIYLGRQI (87 aa)) form the Reverse transcriptase domain.

This is an uncharacterized protein from Caenorhabditis elegans.